A 213-amino-acid chain; its full sequence is Orotate phosphoribosyltransferase (213 aa).

Position 26 (Lys-26) interacts with 5-phospho-alpha-D-ribose 1-diphosphate. Orotate is bound at residue 34 to 35 (FF). 5-phospho-alpha-D-ribose 1-diphosphate is bound by residues 72–73 (YK), Arg-99, Lys-100, Lys-103, His-105, and 124–132 (DDVITAGTA). Orotate is bound by residues Thr-128 and Arg-156.

Belongs to the purine/pyrimidine phosphoribosyltransferase family. PyrE subfamily. In terms of assembly, homodimer. Requires Mg(2+) as cofactor.

It catalyses the reaction orotidine 5'-phosphate + diphosphate = orotate + 5-phospho-alpha-D-ribose 1-diphosphate. Its pathway is pyrimidine metabolism; UMP biosynthesis via de novo pathway; UMP from orotate: step 1/2. Its function is as follows. Catalyzes the transfer of a ribosyl phosphate group from 5-phosphoribose 1-diphosphate to orotate, leading to the formation of orotidine monophosphate (OMP). The protein is Orotate phosphoribosyltransferase of Vibrio atlanticus (strain LGP32) (Vibrio splendidus (strain Mel32)).